The chain runs to 96 residues: Large ribosomal subunit protein bL21 (96 aa).

Belongs to the bacterial ribosomal protein bL21 family. Part of the 50S ribosomal subunit. Contacts protein L20.

In terms of biological role, this protein binds to 23S rRNA in the presence of protein L20. The protein is Large ribosomal subunit protein bL21 of Prosthecochloris aestuarii (strain DSM 271 / SK 413).